Reading from the N-terminus, the 199-residue chain is NAD(P)H dehydrogenase (quinone) (199 aa).

One can recognise a Flavodoxin-like domain in the interval 4 to 190; that stretch reads VLVLYYSSYG…AMARFQGGHV (187 aa). FMN-binding positions include 10–15 and 78–80; these read SSYGHI and TRF. Tyr-12 provides a ligand contact to NAD(+). Trp-98 serves as a coordination point for substrate. Residues 113–119 and His-134 contribute to the FMN site; that span reads STATQHG.

It belongs to the WrbA family. FMN serves as cofactor.

It carries out the reaction a quinone + NADH + H(+) = a quinol + NAD(+). The catalysed reaction is a quinone + NADPH + H(+) = a quinol + NADP(+). In Azoarcus sp. (strain BH72), this protein is NAD(P)H dehydrogenase (quinone).